Reading from the N-terminus, the 186-residue chain is Ribosome-recycling factor (186 aa).

This sequence belongs to the RRF family.

The protein resides in the cytoplasm. Its function is as follows. Responsible for the release of ribosomes from messenger RNA at the termination of protein biosynthesis. May increase the efficiency of translation by recycling ribosomes from one round of translation to another. In Chlorobium chlorochromatii (strain CaD3), this protein is Ribosome-recycling factor.